A 201-amino-acid chain; its full sequence is Glycerol-3-phosphate acyltransferase (201 aa).

A run of 5 helical transmembrane segments spans residues 9–29 (LTLI…FGLI), 60–80 (LAAA…LVAS), 86–106 (AAIG…WIGF), 116–136 (LGVL…VWIV), and 153–173 (IVVP…LFAI).

It belongs to the PlsY family. In terms of assembly, probably interacts with PlsX.

The protein localises to the cell inner membrane. It catalyses the reaction an acyl phosphate + sn-glycerol 3-phosphate = a 1-acyl-sn-glycero-3-phosphate + phosphate. Its pathway is lipid metabolism; phospholipid metabolism. Functionally, catalyzes the transfer of an acyl group from acyl-phosphate (acyl-PO(4)) to glycerol-3-phosphate (G3P) to form lysophosphatidic acid (LPA). This enzyme utilizes acyl-phosphate as fatty acyl donor, but not acyl-CoA or acyl-ACP. This chain is Glycerol-3-phosphate acyltransferase, found in Brucella anthropi (strain ATCC 49188 / DSM 6882 / CCUG 24695 / JCM 21032 / LMG 3331 / NBRC 15819 / NCTC 12168 / Alc 37) (Ochrobactrum anthropi).